Here is a 158-residue protein sequence, read N- to C-terminus: MENPRSASLQKSWKFVRESLLLCLIAGRGEAQCDGCIEYCCDGVPPFCCSYYAYVGDVLSGTAISGIVFGVVFLMGAVAAVFLCVCMCVKNSRGSRVGVFSSTYINTVTQGYPGPPPPPYSYDHEMFPPDLRPPPYTPTVPRSANYSPPPPYPGFSRK.

An N-terminal signal peptide occupies residues 1-31 (MENPRSASLQKSWKFVRESLLLCLIAGRGEA). The Extracellular segment spans residues 32–62 (QCDGCIEYCCDGVPPFCCSYYAYVGDVLSGT). The helical transmembrane segment at 63-83 (AISGIVFGVVFLMGAVAAVFL) threads the bilayer. Topologically, residues 84 to 158 (CVCMCVKNSR…PPPYPGFSRK (75 aa)) are cytoplasmic. The segment at 119-158 (PYSYDHEMFPPDLRPPPYTPTVPRSANYSPPPPYPGFSRK) is disordered. Positions 147–158 (SPPPPYPGFSRK) are enriched in pro residues.

It belongs to the CYYR1 family.

The protein resides in the membrane. The protein is Cysteine and tyrosine-rich protein 1 (cyyr1) of Danio rerio (Zebrafish).